The following is a 678-amino-acid chain: Glycine--tRNA ligase beta subunit (678 aa).

Belongs to the class-II aminoacyl-tRNA synthetase family. In terms of assembly, tetramer of two alpha and two beta subunits.

The protein localises to the cytoplasm. The catalysed reaction is tRNA(Gly) + glycine + ATP = glycyl-tRNA(Gly) + AMP + diphosphate. The chain is Glycine--tRNA ligase beta subunit from Streptococcus pneumoniae (strain Hungary19A-6).